The chain runs to 228 residues: Spore wall protein 12 (228 aa).

Asparagine 117 carries an N-linked (GlcNAc...) asparagine glycan.

This sequence belongs to the SWP12 family.

It localises to the spore wall. In Nosema bombycis (strain CQ1 / CVCC 102059) (Microsporidian parasite), this protein is Spore wall protein 12 (SWP12).